The primary structure comprises 347 residues: S-adenosylmethionine:tRNA ribosyltransferase-isomerase (347 aa).

The protein belongs to the QueA family. As to quaternary structure, monomer.

The protein resides in the cytoplasm. The enzyme catalyses 7-aminomethyl-7-carbaguanosine(34) in tRNA + S-adenosyl-L-methionine = epoxyqueuosine(34) in tRNA + adenine + L-methionine + 2 H(+). It functions in the pathway tRNA modification; tRNA-queuosine biosynthesis. Transfers and isomerizes the ribose moiety from AdoMet to the 7-aminomethyl group of 7-deazaguanine (preQ1-tRNA) to give epoxyqueuosine (oQ-tRNA). In Xylella fastidiosa (strain M23), this protein is S-adenosylmethionine:tRNA ribosyltransferase-isomerase.